We begin with the raw amino-acid sequence, 75 residues long: Small ribosomal subunit protein bS16 (75 aa).

This sequence belongs to the bacterial ribosomal protein bS16 family.

This chain is Small ribosomal subunit protein bS16, found in Campylobacter hominis (strain ATCC BAA-381 / DSM 21671 / CCUG 45161 / LMG 19568 / NCTC 13146 / CH001A).